The following is a 258-amino-acid chain: Ferredoxin--NADP reductase (258 aa).

An FAD-binding FR-type domain is found at 2–102 (SNLNVERVLS…RKPTGTLVTS (101 aa)). Position 17 (aspartate 17) interacts with NADP(+). Residues 51–54 (RAYS), 67–69 (FSI), 74–77 (GPLT), and threonine 117 each bind FAD. NADP(+)-binding positions include 144–145 (VR), 181–182 (TR), and arginine 190. Position 254 to 258 (254 to 258 (AFVEK)) interacts with FAD.

It belongs to the ferredoxin--NADP reductase type 1 family. In terms of assembly, monomer. It depends on FAD as a cofactor.

The enzyme catalyses 2 reduced [2Fe-2S]-[ferredoxin] + NADP(+) + H(+) = 2 oxidized [2Fe-2S]-[ferredoxin] + NADPH. Functionally, transports electrons between ferredoxin and NADPH. This Azotobacter vinelandii protein is Ferredoxin--NADP reductase.